The chain runs to 428 residues: Protein CANDIDATE G-PROTEIN COUPLED RECEPTOR 6 (428 aa).

A signal peptide spans M1–A22. 3 N-linked (GlcNAc...) asparagine glycosylation sites follow: N31, N89, and N157. 7 helical membrane passes run L173–W193, I202–V222, I238–I258, L276–E296, I310–M330, F356–M376, and V385–F405.

Belongs to the LU7TM family.

It localises to the membrane. In terms of biological role, G-protein coupled receptor. Plays a role in plants and microbes interactions. This is Protein CANDIDATE G-PROTEIN COUPLED RECEPTOR 6 from Arabidopsis thaliana (Mouse-ear cress).